The chain runs to 940 residues: Translation initiation factor IF-2 (940 aa).

Disordered stretches follow at residues 48 to 264 (ESFG…VESK) and 278 to 351 (QVAE…TERK). 5 stretches are compositionally biased toward basic and acidic residues: residues 65 to 95 (SKPE…KEEV), 112 to 125 (FKAE…EQAA), 155 to 206 (NNER…REAA), 232 to 258 (RTSE…KFEE), and 292 to 301 (ARPDKKRDFN). Residues 314–332 (NRNSQNQVRNQRTSNWNNN) show a composition bias toward low complexity. One can recognise a tr-type G domain in the interval 442 to 609 (ERPPVVTIMG…TVLLVAEIQE (168 aa)). Residues 451-458 (GHVDHGKT) form a G1 region. 451–458 (GHVDHGKT) is a binding site for GTP. Residues 476–480 (GITQH) form a G2 region. The interval 497 to 500 (DTPG) is G3. GTP contacts are provided by residues 497 to 501 (DTPGH) and 551 to 554 (NKID). The tract at residues 551–554 (NKID) is G4. Residues 587–589 (SAK) form a G5 region.

The protein belongs to the TRAFAC class translation factor GTPase superfamily. Classic translation factor GTPase family. IF-2 subfamily.

It is found in the cytoplasm. One of the essential components for the initiation of protein synthesis. Protects formylmethionyl-tRNA from spontaneous hydrolysis and promotes its binding to the 30S ribosomal subunits. Also involved in the hydrolysis of GTP during the formation of the 70S ribosomal complex. The polypeptide is Translation initiation factor IF-2 (Streptococcus suis (strain 98HAH33)).